Here is a 432-residue protein sequence, read N- to C-terminus: Neuropeptide FF receptor 1 (432 aa).

The Extracellular segment spans residues 1–43 (MEAEPSQPPNGSWPLGQNGSDVETSMATSLTFSSYYQHSSPVA). 2 N-linked (GlcNAc...) asparagine glycosylation sites follow: N10 and N18. A helical transmembrane segment spans residues 44–64 (AMFIAAYVLIFLLCMVGNTLV). Over 65-80 (CFIVLKNRHMRTVTNM) the chain is Cytoplasmic. The helical transmembrane segment at 81–101 (FILNLAVSDLLVGIFCMPTTL) threads the bilayer. Residues 102-117 (VDNLITGWPFDNATCK) are Extracellular-facing. N-linked (GlcNAc...) asparagine glycosylation occurs at N113. C116 and C203 are disulfide-bonded. The helical transmembrane segment at 118-138 (MSGLVQGMSVSASVFTLVAIA) threads the bilayer. The Cytoplasmic segment spans residues 139 to 158 (VERFRCIVHPFREKLTLRKA). The helical transmembrane segment at 159–179 (LFTIAVIWALALLIMCPSAVT) threads the bilayer. Residues 180-214 (LTVTREEHHFMLDARNRSYPLYSCWEAWPEKGMRK) are Extracellular-facing. A glycan (N-linked (GlcNAc...) asparagine) is linked at N195. Residues 215–235 (VYTAVLFAHIYLVPLALIVVM) form a helical membrane-spanning segment. The Cytoplasmic portion of the chain corresponds to 236–273 (YVRIARKLCQAPGPARDTEEAVAEGGRTSRRRARVVHM). A helical transmembrane segment spans residues 274 to 294 (LVMVALFFTLSWLPLWVLLLL). At 295 to 309 (IDYGELSELQLHLLS) the chain is on the extracellular side. A helical transmembrane segment spans residues 310-330 (VYAFPLAHWLAFFHSSANPII). Topologically, residues 331 to 432 (YGYFNENFRR…MPLTIPAWNI (102 aa)) are cytoplasmic. The span at 380-406 (PSDSGLPSESGPSSGVPGPGRLPLRNG) shows a compositional bias: low complexity. The tract at residues 380–422 (PSDSGLPSESGPSSGVPGPGRLPLRNGRVAHQDGPGEGPGCNH) is disordered.

This sequence belongs to the G-protein coupled receptor 1 family. In terms of tissue distribution, expressed at high levels in the hypothalamus. Moderate levels found in the midbrain, thalamus, medulla oblongata, testis, eye, whole brain, cerebral cortex, striatum, hippocampus, cerebellum, optic nerve, placenta, spinal cord, pituitary gland and ovary.

The protein localises to the cell membrane. In terms of biological role, receptor for NPAF (A-18-F-amide) and NPFF (F-8-F-amide) neuropeptides, also known as morphine-modulating peptides. Can also be activated by a variety of naturally occurring or synthetic FMRF-amide like ligands. This receptor mediates its action by association with G proteins that activate a phosphatidylinositol-calcium second messenger system. This chain is Neuropeptide FF receptor 1 (Npffr1), found in Rattus norvegicus (Rat).